A 562-amino-acid polypeptide reads, in one-letter code: Protein wntless (562 aa).

The Cytoplasmic portion of the chain corresponds to M1–K13. The helical transmembrane segment at L14–L34 threads the bilayer. The Lumenal segment spans residues Y35–Q239. N-linked (GlcNAc...) asparagine glycosylation is present at N58. A helical transmembrane segment spans residues I240–W260. Residues R261–P270 lie on the Cytoplasmic side of the membrane. The helical transmembrane segment at A271 to L291 threads the bilayer. The Lumenal portion of the chain corresponds to E292–Q311. Residues G312–I332 traverse the membrane as a helical segment. Over Q333–R344 the chain is Cytoplasmic. Residues Y345–C365 form a helical membrane-spanning segment. At E366–T390 the chain is on the lumenal side. Residues F391–W411 form a helical membrane-spanning segment. The Cytoplasmic segment spans residues K412–R441. A helical transmembrane segment spans residues F442–M462. The Lumenal segment spans residues G463 to S482. Residues A483–Y503 traverse the membrane as a helical segment. At A504–D562 the chain is on the cytoplasmic side. The disordered stretch occupies residues H539–D562. The segment covering P541 to T556 has biased composition (polar residues).

This sequence belongs to the wntless family. Interacts with wg; in the Golgi. Interacts with Vps35, a component of the retromer complex; wls stability is regulated by Vps35.

The protein resides in the presynaptic cell membrane. It localises to the postsynaptic cell membrane. The protein localises to the cell membrane. Its subcellular location is the endoplasmic reticulum membrane. It is found in the endosome membrane. The protein resides in the golgi apparatus membrane. In terms of biological role, a segment polarity gene required for wingless (wg)-dependent patterning processes, acting in both wg-sending cells and wg-target cells. In non-neuronal cells wls directs wg secretion. The wls traffic loop encompasses the Golgi, the cell surface, an endocytic compartment and a retrograde route leading back to the Golgi, and involves clathrin-mediated endocytosis and the retromer complex (a conserved protein complex consisting of Vps35 and Vps26). In neuronal cells (the larval motorneuron NMJ), the wg signal moves across the synapse via the release of wls-containing exosome-like vesicles. Postsynaptic wls is required for the trafficking of fz2 through the fz2-interacting protein Grip. The protein is Protein wntless of Drosophila ananassae (Fruit fly).